Here is a 91-residue protein sequence, read N- to C-terminus: Small ribosomal subunit protein bS20 (91 aa).

The protein belongs to the bacterial ribosomal protein bS20 family.

Binds directly to 16S ribosomal RNA. This is Small ribosomal subunit protein bS20 from Caulobacter sp. (strain K31).